A 135-amino-acid chain; its full sequence is Small ribosomal subunit protein uS11 (135 aa).

The tract at residues 1-26 is disordered; sequence MPPKSRTAGGARKTRRKEKKNVSHGH. Residues 12–23 show a composition bias toward basic residues; the sequence is RKTRRKEKKNVS.

Belongs to the universal ribosomal protein uS11 family. Part of the 30S ribosomal subunit. Interacts with proteins S7 and S18. Binds to IF-3.

Its function is as follows. Located on the platform of the 30S subunit, it bridges several disparate RNA helices of the 16S rRNA. Forms part of the Shine-Dalgarno cleft in the 70S ribosome. The sequence is that of Small ribosomal subunit protein uS11 from Beutenbergia cavernae (strain ATCC BAA-8 / DSM 12333 / CCUG 43141 / JCM 11478 / NBRC 16432 / NCIMB 13614 / HKI 0122).